Reading from the N-terminus, the 414-residue chain is Tyrosine--tRNA ligase (414 aa).

Tyr35 is an L-tyrosine binding site. The 'HIGH' region motif lies at 40-49; the sequence is PTADSLHVGH. L-tyrosine-binding residues include Tyr164 and Gln168. The 'KMSKS' region motif lies at 226–230; that stretch reads KFGKT. Residue Lys229 coordinates ATP. The S4 RNA-binding domain occupies 347–414; it reads TKVIDALVEL…KKKYFVILVK (68 aa).

Belongs to the class-I aminoacyl-tRNA synthetase family. TyrS type 1 subfamily. In terms of assembly, homodimer.

The protein resides in the cytoplasm. The enzyme catalyses tRNA(Tyr) + L-tyrosine + ATP = L-tyrosyl-tRNA(Tyr) + AMP + diphosphate + H(+). Functionally, catalyzes the attachment of tyrosine to tRNA(Tyr) in a two-step reaction: tyrosine is first activated by ATP to form Tyr-AMP and then transferred to the acceptor end of tRNA(Tyr). The sequence is that of Tyrosine--tRNA ligase from Mycoplasma capricolum subsp. capricolum (strain California kid / ATCC 27343 / NCTC 10154).